The sequence spans 413 residues: Dolichyl-diphosphooligosaccharide--protein glycosyltransferase 48 kDa subunit (413 aa).

At Gly-1–Tyr-383 the chain is on the lumenal side. The chain crosses the membrane as a helical span at residues Pro-384–Leu-404. Over His-405–Asp-413 the chain is Cytoplasmic.

This sequence belongs to the DDOST 48 kDa subunit family. In terms of assembly, component of the oligosaccharyltransferase (OST) complex.

The protein localises to the endoplasmic reticulum. It localises to the endoplasmic reticulum membrane. Its pathway is protein modification; protein glycosylation. Its function is as follows. Subunit of the oligosaccharyl transferase (OST) complex that catalyzes the initial transfer of a defined glycan (Glc(3)Man(9)GlcNAc(2) in eukaryotes) from the lipid carrier dolichol-pyrophosphate to an asparagine residue within an Asn-X-Ser/Thr consensus motif in nascent polypeptide chains, the first step in protein N-glycosylation. N-glycosylation occurs cotranslationally and the complex associates with the Sec61 complex at the channel-forming translocon complex that mediates protein translocation across the endoplasmic reticulum (ER). All subunits are required for a maximal enzyme activity. Required for the assembly of both SST3A- and SS3B-containing OST complexes. The sequence is that of Dolichyl-diphosphooligosaccharide--protein glycosyltransferase 48 kDa subunit from Gallus gallus (Chicken).